Here is a 410-residue protein sequence, read N- to C-terminus: Trans-splicing factor Raa2, chloroplastic (410 aa).

Disordered stretches follow at residues 1 to 40 (MRTR…QRPA) and 56 to 106 (AADH…QQQV). The transit peptide at 1-46 (MRTRAGAFFGKQRSTSPSGSSTSASRQWLRSSPGRTQRPAAHRVLA) directs the protein to the chloroplast. Positions 14 to 25 (STSPSGSSTSAS) are enriched in low complexity. Residues 26–35 (RQWLRSSPGR) are compositionally biased toward polar residues. The segment covering 96 to 106 (RQAQRRQQQQV) has biased composition (low complexity).

It belongs to the pseudouridine synthase TruB family. Possibly associated with other factors required for trans-splicing.

The protein resides in the plastid. It localises to the chloroplast. Its function is as follows. Required for trans-splicing of exons 2 and 3 of the chloroplast encoded psaA mRNA (a group II intron). It is not known if this protein has pseudouridine activity; mutation of the potential active site residue does not cause loss of trans-splicing. The sequence is that of Trans-splicing factor Raa2, chloroplastic (RAA2) from Chlamydomonas reinhardtii (Chlamydomonas smithii).